The primary structure comprises 143 residues: Transcriptional regulator MraZ (143 aa).

SpoVT-AbrB domains are found at residues 5–47 (TFTP…PRNV) and 76–119 (ADEQ…NAES).

The protein belongs to the MraZ family. Forms oligomers.

It localises to the cytoplasm. The protein localises to the nucleoid. The polypeptide is Transcriptional regulator MraZ (Corynebacterium kroppenstedtii (strain DSM 44385 / JCM 11950 / CIP 105744 / CCUG 35717)).